The chain runs to 341 residues: Cysteine-rich repeat secretory protein 1 (341 aa).

An N-terminal signal peptide occupies residues Met-1–Ala-25. 2 consecutive Gnk2-homologous domains span residues Thr-28–Ile-131 and Asp-136–Leu-245. 4 cysteine pairs are disulfide-bonded: Cys-85–Cys-94, Cys-97–Cys-122, Cys-199–Cys-208, and Cys-211–Cys-236. Positions Pro-247–Gln-262 are enriched in pro residues. The tract at residues Pro-247–Asp-274 is disordered.

The protein belongs to the cysteine-rich repeat secretory protein family.

It is found in the secreted. In Arabidopsis thaliana (Mouse-ear cress), this protein is Cysteine-rich repeat secretory protein 1 (CRRSP1).